A 306-amino-acid polypeptide reads, in one-letter code: Protein FdhE homolog (306 aa).

The protein belongs to the FdhE family.

It is found in the cytoplasm. In terms of biological role, necessary for formate dehydrogenase activity. This Glaesserella parasuis serovar 5 (strain SH0165) (Haemophilus parasuis) protein is Protein FdhE homolog.